Reading from the N-terminus, the 59-residue chain is UPF0339 protein CC_2965 (59 aa).

This sequence belongs to the UPF0339 family.

This Caulobacter vibrioides (strain ATCC 19089 / CIP 103742 / CB 15) (Caulobacter crescentus) protein is UPF0339 protein CC_2965.